We begin with the raw amino-acid sequence, 137 residues long: Envelope glycoprotein L (137 aa).

An N-terminal signal peptide occupies residues 1 to 25 (MRAVGVFLATCLVTIFVLPTWGNWA). Positions 23 to 128 (NWAYPCCHVT…SVEDLFGANL (106 aa)) are interaction with gH. Intrachain disulfides connect cysteine 28-cysteine 56 and cysteine 29-cysteine 79.

It belongs to the herpesviridae glycoprotein L family. Interacts with glycoprotein H (gH); this interaction is necessary for the correct processing and cell surface expression of gH. The heterodimer gH/gL seems to interact with gB trimers during fusion. The heterodimer gH/gL interacts with host EPHA2 to facilitate virus internalization and fusion.

It localises to the virion membrane. The protein localises to the host cell membrane. It is found in the host Golgi apparatus. Its subcellular location is the host trans-Golgi network. The heterodimer glycoprotein H-glycoprotein L is required for the fusion of viral and plasma membranes leading to virus entry into the host cell. Acts as a functional inhibitor of gH and maintains gH in an inhibited form. Upon binding to host integrins, gL dissociates from gH leading to activation of the viral fusion glycoproteins gB and gH. The heterodimer gH/gL targets also host EPHA2 to promote viral entry. This chain is Envelope glycoprotein L, found in Homo sapiens (Human).